Consider the following 3971-residue polypeptide: Mycosubtilin synthase subunit A (3971 aa).

Positions 160 to 479 (EPEADELAFI…ELEDIDLGRV (320 aa)) are acyl-CoA ligase. The Carrier 1 domain occupies 578–653 (TPIHEIETAL…DLAAFLVENH (76 aa)). An O-(pantetheine 4'-phosphoryl)serine modification is found at Ser-613. In terms of domain architecture, Ketosynthase family 3 (KS3) spans 669-1092 (SKDIAIIGMS…GTNAHVVLEE (424 aa)). Active-site for beta-ketoacyl synthase activity residues include Cys-843, His-974, and His-1014. The 76-residue stretch at 1290–1365 (THIESFLKTV…SVVDYLAENV (76 aa)) folds into the Carrier 2 domain. Ser-1324 bears the O-(pantetheine 4'-phosphoryl)serine mark. Residues 1434–1456 (ESEISQDKTSLSPKSVTAKKNSA) are disordered. Residues 1440-1456 (DKTSLSPKSVTAKKNSA) are compositionally biased toward polar residues. The segment at 1529-1856 (IIAERSDGSR…SYFEQSQVPI (328 aa)) is GSA-AT. Lys-1759 carries the N6-(pyridoxal phosphate)lysine modification. The interval 1921–1942 (GGFIPEGPDSPNDGGHKEPETY) is disordered. Positions 1938-2240 (EPETYELSPE…NMVPVKNTAS (303 aa)) are condensation 1. Residues 2405–2480 (EPENETELQI…ELANFIRGEK (76 aa)) enclose the Carrier 3 domain. Position 2440 is an O-(pantetheine 4'-phosphoryl)serine (Ser-2440). The condensation 2 stretch occupies residues 2492–2781 (QKAFYRTSPA…QTMGIRTKPQ (290 aa)). Positions 2937 to 3823 (PHNDTVCQWF…RNHPAGRKIF (887 aa)) are domain 1 (asparagine-activating). Positions 2967–3364 (TYGQLNERVN…KVEAVQKAVV (398 aa)) are adenylation 1. Residues 3442–3517 (PPGNEVESKL…QLANMALRME (76 aa)) form the Carrier 4 domain. Ser-3477 bears the O-(pantetheine 4'-phosphoryl)serine mark. Residues 3529–3818 (KISYYPVSSA…NTLVIRNHPA (290 aa)) are condensation 3.

Belongs to the ATP-dependent AMP-binding enzyme family. It depends on pyridoxal 5'-phosphate as a cofactor. Pantetheine 4'-phosphate is required as a cofactor.

In terms of biological role, this protein is a multifunctional enzyme, able to activate a long chain fatty acid and link it with the amino acid Asn as part of the synthesis of mycosubtilin. The activation sites consist of individual domains. This chain is Mycosubtilin synthase subunit A (mycA), found in Bacillus subtilis.